Consider the following 305-residue polypeptide: tRNA dimethylallyltransferase (305 aa).

Gly14–Thr21 provides a ligand contact to ATP. Thr16 to Thr21 contributes to the substrate binding site. Interaction with substrate tRNA regions lie at residues Asp39–Leu42, Gln163–Arg167, and Arg243–Arg248.

This sequence belongs to the IPP transferase family. In terms of assembly, monomer. Mg(2+) serves as cofactor.

It catalyses the reaction adenosine(37) in tRNA + dimethylallyl diphosphate = N(6)-dimethylallyladenosine(37) in tRNA + diphosphate. Catalyzes the transfer of a dimethylallyl group onto the adenine at position 37 in tRNAs that read codons beginning with uridine, leading to the formation of N6-(dimethylallyl)adenosine (i(6)A). The sequence is that of tRNA dimethylallyltransferase from Vesicomyosocius okutanii subsp. Calyptogena okutanii (strain HA).